We begin with the raw amino-acid sequence, 502 residues long: UPF0371 protein CLK_3516 (502 aa).

This sequence belongs to the UPF0371 family.

This Clostridium botulinum (strain Loch Maree / Type A3) protein is UPF0371 protein CLK_3516.